The primary structure comprises 426 residues: Glutamate-1-semialdehyde 2,1-aminomutase (426 aa).

K265 carries the post-translational modification N6-(pyridoxal phosphate)lysine.

The protein belongs to the class-III pyridoxal-phosphate-dependent aminotransferase family. HemL subfamily. In terms of assembly, homodimer. It depends on pyridoxal 5'-phosphate as a cofactor.

The protein resides in the cytoplasm. It carries out the reaction (S)-4-amino-5-oxopentanoate = 5-aminolevulinate. It participates in porphyrin-containing compound metabolism; protoporphyrin-IX biosynthesis; 5-aminolevulinate from L-glutamyl-tRNA(Glu): step 2/2. This is Glutamate-1-semialdehyde 2,1-aminomutase from Paraburkholderia phymatum (strain DSM 17167 / CIP 108236 / LMG 21445 / STM815) (Burkholderia phymatum).